We begin with the raw amino-acid sequence, 86 residues long: Alpha-mammal toxin Ts3 (86 aa).

Residues 1-19 (MNYFILLVVVCLLTAGTEG) form the signal peptide. Residues 21–82 (KDGYPVEYDN…EPTKTNGKCK (62 aa)) form the LCN-type CS-alpha/beta domain. 4 cysteine pairs are disulfide-bonded: Cys31–Cys81, Cys35–Cys57, Cys43–Cys64, and Cys47–Cys66. At Ser83 the chain carries Serine amide.

As to expression, expressed by the venom gland.

The protein localises to the secreted. In terms of biological role, alpha toxins bind voltage-independently at site-3 of sodium channels (Nav) and inhibit the inactivation of the activated channels, thereby blocking neuronal transmission. This synthetic toxin inhibits inactivation of rat Nav1.4/SCN4A (when tested at 201 nM). In addition, it has been shown to cause a persistent sodium channel activation in nitrergic inhibitory fibers innervating the rabbit corpus cavernosum, resulting in NO release and cavernosal smooth muscle relaxation. This toxin is active against mammals. This synthetic peptide with a Ser at position 31 (C12S) acts as a bradykinin-potentiating peptide (BPP). Induces endothelium-dependent vasodilation that is reverted by NO synthase inhibitor, suggesting it activates molecular targets on vascular endothelium leading to NO production and vasodilation. It appears to induce vasodilation through muscarinic acetylcholine receptors (AChR) M2 (CHRM2) and M3 (CHRM3). Does not inhibit the angiotensin-converting enzyme (ACE). Does not act via bradykinin B2 receptor. This Tityus serrulatus (Brazilian scorpion) protein is Alpha-mammal toxin Ts3.